Reading from the N-terminus, the 156-residue chain is ATP synthase subunit b (156 aa).

Residues 7 to 29 traverse the membrane as a helical segment; the sequence is LIGQMGTFLVFWWFVNKVIWPMF.

It belongs to the ATPase B chain family. In terms of assembly, F-type ATPases have 2 components, F(1) - the catalytic core - and F(0) - the membrane proton channel. F(1) has five subunits: alpha(3), beta(3), gamma(1), delta(1), epsilon(1). F(0) has three main subunits: a(1), b(2) and c(10-14). The alpha and beta chains form an alternating ring which encloses part of the gamma chain. F(1) is attached to F(0) by a central stalk formed by the gamma and epsilon chains, while a peripheral stalk is formed by the delta and b chains.

It localises to the cell inner membrane. Functionally, f(1)F(0) ATP synthase produces ATP from ADP in the presence of a proton or sodium gradient. F-type ATPases consist of two structural domains, F(1) containing the extramembraneous catalytic core and F(0) containing the membrane proton channel, linked together by a central stalk and a peripheral stalk. During catalysis, ATP synthesis in the catalytic domain of F(1) is coupled via a rotary mechanism of the central stalk subunits to proton translocation. Component of the F(0) channel, it forms part of the peripheral stalk, linking F(1) to F(0). In Dichelobacter nodosus (strain VCS1703A), this protein is ATP synthase subunit b.